The following is a 106-amino-acid chain: Immunoglobulin lambda constant 3 (106 aa).

An Ig-like domain is found at 7–101 (PSVTLFPPSS…EGSTVEKTVA (95 aa)). A disulfide bridge connects residues Cys28 and Cys87.

Immunoglobulins are composed of two identical heavy chains and two identical light chains; disulfide-linked.

It is found in the secreted. It localises to the cell membrane. Its function is as follows. Constant region of immunoglobulin light chains. Immunoglobulins, also known as antibodies, are membrane-bound or secreted glycoproteins produced by B lymphocytes. In the recognition phase of humoral immunity, the membrane-bound immunoglobulins serve as receptors which, upon binding of a specific antigen, trigger the clonal expansion and differentiation of B lymphocytes into immunoglobulins-secreting plasma cells. Secreted immunoglobulins mediate the effector phase of humoral immunity, which results in the elimination of bound antigens. The antigen binding site is formed by the variable domain of one heavy chain, together with that of its associated light chain. Thus, each immunoglobulin has two antigen binding sites with remarkable affinity for a particular antigen. The variable domains are assembled by a process called V-(D)-J rearrangement and can then be subjected to somatic hypermutations which, after exposure to antigen and selection, allow affinity maturation for a particular antigen. This chain is Immunoglobulin lambda constant 3, found in Homo sapiens (Human).